The chain runs to 443 residues: Probable glycine dehydrogenase (decarboxylating) subunit 1 (443 aa).

This sequence belongs to the GcvP family. N-terminal subunit subfamily. The glycine cleavage system is composed of four proteins: P, T, L and H. In this organism, the P 'protein' is a heterodimer of two subunits.

The enzyme catalyses N(6)-[(R)-lipoyl]-L-lysyl-[glycine-cleavage complex H protein] + glycine + H(+) = N(6)-[(R)-S(8)-aminomethyldihydrolipoyl]-L-lysyl-[glycine-cleavage complex H protein] + CO2. Its function is as follows. The glycine cleavage system catalyzes the degradation of glycine. The P protein binds the alpha-amino group of glycine through its pyridoxal phosphate cofactor; CO(2) is released and the remaining methylamine moiety is then transferred to the lipoamide cofactor of the H protein. This is Probable glycine dehydrogenase (decarboxylating) subunit 1 from Nitratidesulfovibrio vulgaris (strain DSM 19637 / Miyazaki F) (Desulfovibrio vulgaris).